Reading from the N-terminus, the 153-residue chain is 6,7-dimethyl-8-ribityllumazine synthase (153 aa).

5-amino-6-(D-ribitylamino)uracil is bound by residues Phe-22, 56-58 (AFE), and 80-82 (AVI). 85-86 (ST) lines the (2S)-2-hydroxy-3-oxobutyl phosphate pocket. His-88 functions as the Proton donor in the catalytic mechanism. Phe-113 lines the 5-amino-6-(D-ribitylamino)uracil pocket. Arg-127 is a binding site for (2S)-2-hydroxy-3-oxobutyl phosphate.

It belongs to the DMRL synthase family.

It carries out the reaction (2S)-2-hydroxy-3-oxobutyl phosphate + 5-amino-6-(D-ribitylamino)uracil = 6,7-dimethyl-8-(1-D-ribityl)lumazine + phosphate + 2 H2O + H(+). It participates in cofactor biosynthesis; riboflavin biosynthesis; riboflavin from 2-hydroxy-3-oxobutyl phosphate and 5-amino-6-(D-ribitylamino)uracil: step 1/2. Catalyzes the formation of 6,7-dimethyl-8-ribityllumazine by condensation of 5-amino-6-(D-ribitylamino)uracil with 3,4-dihydroxy-2-butanone 4-phosphate. This is the penultimate step in the biosynthesis of riboflavin. In Clostridium novyi (strain NT), this protein is 6,7-dimethyl-8-ribityllumazine synthase.